We begin with the raw amino-acid sequence, 222 residues long: Ribosomal RNA small subunit methyltransferase G (222 aa).

Residues glycine 80, leucine 85, and arginine 149 each coordinate S-adenosyl-L-methionine.

The protein belongs to the methyltransferase superfamily. RNA methyltransferase RsmG family.

Its subcellular location is the cytoplasm. Functionally, specifically methylates the N7 position of a guanine in 16S rRNA. This is Ribosomal RNA small subunit methyltransferase G from Treponema pallidum (strain Nichols).